An 87-amino-acid chain; its full sequence is Small ribosomal subunit protein uS15 (87 aa).

Residues 1 to 22 are disordered; that stretch reads MSEINKAEIVASNARAPSDTGS.

This sequence belongs to the universal ribosomal protein uS15 family. As to quaternary structure, part of the 30S ribosomal subunit. Forms a bridge to the 50S subunit in the 70S ribosome, contacting the 23S rRNA.

Functionally, one of the primary rRNA binding proteins, it binds directly to 16S rRNA where it helps nucleate assembly of the platform of the 30S subunit by binding and bridging several RNA helices of the 16S rRNA. In terms of biological role, forms an intersubunit bridge (bridge B4) with the 23S rRNA of the 50S subunit in the ribosome. The polypeptide is Small ribosomal subunit protein uS15 (Leptothrix cholodnii (strain ATCC 51168 / LMG 8142 / SP-6) (Leptothrix discophora (strain SP-6))).